The sequence spans 327 residues: Serine/threonine-protein phosphatase PP1-beta catalytic subunit (327 aa).

Ala2 is modified (N-acetylalanine). Residues Asp63, His65, Asp91, and Asn123 each contribute to the Mn(2+) site. The active-site Proton donor is His124. 2 residues coordinate Mn(2+): His172 and His247. Positions 305–327 (QYGGLNSGRPVTPPRTANPPKKR) are disordered. Thr316 carries the post-translational modification Phosphothreonine.

It belongs to the PPP phosphatase family. PP-1 subfamily. PP1 comprises a catalytic subunit, PPP1CA, PPP1CB or PPP1CC, which is folded into its native form by inhibitor 2 and glycogen synthetase kinase 3, and then complexed to one or several targeting or regulatory subunits. The targeting or regulatory subunits determine the substrate specificity of PP1. PPP1R12A, PPP1R12B and PPP1R12C mediate binding to myosin. PPP1R3A (in skeletal muscle), PPP1R3B (in liver), PPP1R3C, PPP1R3D and PPP1R3F (in brain) mediate binding to glycogen. PPP1R15A and PPP1R15B mediate binding to EIF2S1. Part of a complex containing PPP1R15B, PP1 and NCK1/2. Interacts with PPP1R7 and PPP1R12C. Interacts with PPP1R16B. Component of the PTW/PP1 phosphatase complex, composed of PPP1R10/PNUTS, TOX4, WDR82, and PPP1CA or PPP1CB or PPP1CC. Interacts with PPP1R8. Interacts with PPP1R12A and NUAK1; the interaction is direct. Interacts with TRIM28; the interaction is weak. Interacts with FOXP3. Interacts with RRP1B. Interacts with SERPINE1. Interacts with LZTR1. Component of the SHOC2-MRAS-PP1c (SMP) complex consisting of SHOC2, GTP-bound M-Ras/MRAS and the catalytic subunit of protein phosphatase 1 (either PPP1CA, PPP1CB or PPP1CC). SHOC2 and PP1c preferably bind M-Ras/MRAS, but they also bind K-Ras/KRAS, N-Ras/NRAS and H-Ras/HRAS; these interactions are GTP-dependent and both SHOC2 and PP1c are required to form a stable complex. Interacts with SHOC2 in the absence of Ras GTPases. Mn(2+) is required as a cofactor.

The protein localises to the cytoplasm. The protein resides in the nucleus. It is found in the nucleoplasm. It localises to the nucleolus. The enzyme catalyses O-phospho-L-seryl-[protein] + H2O = L-seryl-[protein] + phosphate. It catalyses the reaction O-phospho-L-threonyl-[protein] + H2O = L-threonyl-[protein] + phosphate. It carries out the reaction O-phospho-L-seryl-[myosin light chain] + H2O = L-seryl-[myosin light chain] + phosphate. The catalysed reaction is O-phospho-L-threonyl-[myosin light chain] + H2O = L-threonyl-[myosin light chain] + phosphate. Inhibited by the toxins okadaic acid, tautomycin and microcystin Leu-Arg. The phosphatase activity of the PPP1R15A-PP1 complex toward EIF2S1 is specifically inhibited by Salubrinal, a drug that protects cells from endoplasmic reticulum stress. Protein phosphatase that associates with over 200 regulatory proteins to form highly specific holoenzymes which dephosphorylate hundreds of biological targets. Protein phosphatase (PP1) is essential for cell division, it participates in the regulation of glycogen metabolism, muscle contractility and protein synthesis. Involved in regulation of ionic conductances and long-term synaptic plasticity. Component of the PTW/PP1 phosphatase complex, which plays a role in the control of chromatin structure and cell cycle progression during the transition from mitosis into interphase. In balance with CSNK1D and CSNK1E, determines the circadian period length, through the regulation of the speed and rhythmicity of PER1 and PER2 phosphorylation. May dephosphorylate CSNK1D and CSNK1E. Core component of the SHOC2-MRAS-PP1c (SMP) holophosphatase complex that regulates the MAPK pathway activation. The SMP complex specifically dephosphorylates the inhibitory phosphorylation at 'Ser-259' of RAF1 kinase, 'Ser-365' of BRAF kinase and 'Ser-214' of ARAF kinase, stimulating their kinase activities. The SMP complex enhances the dephosphorylation activity and substrate specificity of PP1c. This Bos taurus (Bovine) protein is Serine/threonine-protein phosphatase PP1-beta catalytic subunit (PPP1CB).